The sequence spans 386 residues: Galactokinase (386 aa).

32–35 (EHTD) contributes to the substrate binding site. Residues Ser66 and 123–129 (GASLSSS) contribute to the ATP site. 2 residues coordinate Mg(2+): Ser129 and Glu161. The active-site Proton acceptor is Asp173. Tyr223 provides a ligand contact to substrate.

Belongs to the GHMP kinase family. GalK subfamily.

It is found in the cytoplasm. It carries out the reaction alpha-D-galactose + ATP = alpha-D-galactose 1-phosphate + ADP + H(+). The protein operates within carbohydrate metabolism; galactose metabolism. Its function is as follows. Catalyzes the transfer of the gamma-phosphate of ATP to D-galactose to form alpha-D-galactose-1-phosphate (Gal-1-P). The protein is Galactokinase of Staphylococcus saprophyticus subsp. saprophyticus (strain ATCC 15305 / DSM 20229 / NCIMB 8711 / NCTC 7292 / S-41).